The primary structure comprises 348 residues: Nicotinate-nucleotide--dimethylbenzimidazole phosphoribosyltransferase (348 aa).

Glutamate 316 functions as the Proton acceptor in the catalytic mechanism.

The protein belongs to the CobT family.

It carries out the reaction 5,6-dimethylbenzimidazole + nicotinate beta-D-ribonucleotide = alpha-ribazole 5'-phosphate + nicotinate + H(+). It participates in nucleoside biosynthesis; alpha-ribazole biosynthesis; alpha-ribazole from 5,6-dimethylbenzimidazole: step 1/2. Catalyzes the synthesis of alpha-ribazole-5'-phosphate from nicotinate mononucleotide (NAMN) and 5,6-dimethylbenzimidazole (DMB). The chain is Nicotinate-nucleotide--dimethylbenzimidazole phosphoribosyltransferase from Xanthomonas campestris pv. campestris (strain 8004).